The sequence spans 389 residues: NAD-dependent protein deacetylase sirtuin-2 (389 aa).

Residues 1–34 (MAEPDPSHPLETQAGKVQEAQDSDSDSEGGAAGG) form a disordered region. An N-acetylalanine modification is found at A2. Phosphoserine occurs at positions 23, 25, and 27. Residues 41–51 (LRNLFSQTLSL) carry the Nuclear export signal motif. Position 53 is a phosphoserine (S53). One can recognise a Deacetylase sirtuin-type domain in the interval 57 to 338 (RLLDELTLEG…LALAELLGWK (282 aa)). Residues 85–89 (AGIST) and 95–97 (DFR) contribute to the NAD(+) site. S100 carries the phosphoserine modification. Residue 167–170 (QNID) participates in NAD(+) binding. Catalysis depends on H187, which acts as the Proton acceptor. Positions 195 and 200 each coordinate Zn(2+). Position 207 is a phosphoserine (S207). Zn(2+) is bound by residues C221 and C224. NAD(+) contacts are provided by residues 262 to 263 (TS), 286 to 288 (NKE), and C324. Residues 351–389 (SIDAQSGAGVPNPSTSASPKKSPPPAKDEARTTEREKPQ) form a disordered region. Residues 361–370 (PNPSTSASPK) are compositionally biased toward low complexity. S368 carries the phosphoserine; by CDK2 and CDK5 modification. S372 is subject to Phosphoserine. The span at 376-389 (AKDEARTTEREKPQ) shows a compositional bias: basic and acidic residues.

Belongs to the sirtuin family. Class I subfamily. Interacts with CDC20, FOXO3 and FZR1. Associates with microtubules in primary cortical mature neurons. Homotrimer. Isoform 1 and isoform 2 interact (via both phosphorylated, unphosphorylated, active or inactive forms) with HDAC6; the interaction is necessary for the complex to interact with alpha-tubulin, suggesting that these proteins belong to a large complex that deacetylates the cytoskeleton. Interacts with FOXO1; the interaction is disrupted upon serum-starvation or oxidative stress, leading to increased level of acetylated FOXO1 and induction of autophagy. Interacts with RELA; the interaction occurs in the cytoplasm and is increased in a TNF-alpha-dependent manner. Interacts with HOXA10; the interaction is direct. Interacts with YWHAB and YWHAG; the interactions occur in a AKT-dependent manner and increase SIRT2-dependent TP53 deacetylation. Interacts with MAPK1/ERK2 and MAPK3/ERK1; the interactions increase SIRT2 stability and deacetylation activity. Interacts (phosphorylated form) with KMT5A isoform 2; the interaction is direct, stimulates KMT5A-mediated methyltransferase activity on histone at 'Lys-20' (H4K20me1) and is increased in a H(2)O(2)-induced oxidative stress-dependent manner. Interacts with G6PD; the interaction is enhanced by H(2)O(2) treatment. Interacts with a G1/S-specific cyclin E-CDK2 complex. Interacts with AURKA, CDK5R1 (p35 form) and CDK5 and HIF1A. Isoform 1, isoform 2 and isoform 5 interact (via C-terminus region) with EP300. Interacts with the tRNA ligase SARS1; recruited to the VEGFA promoter via interaction with SARS1. Interacts with BEX4; negatively regulates alpha-tubulin deacetylation by SIRT2. Requires Zn(2+) as cofactor. Phosphorylated at phosphoserine and phosphothreonine. Phosphorylated at Ser-368 by a mitotic kinase CDK1/cyclin B at the G2/M transition; phosphorylation regulates the delay in cell-cycle progression. Phosphorylated at Ser-368 by a mitotic kinase G1/S-specific cyclin E/Cdk2 complex; phosphorylation inactivates SIRT2-mediated alpha-tubulin deacetylation and thereby negatively regulates cell adhesion, cell migration and neurite outgrowth during neuronal differentiation. Phosphorylated by cyclin A/Cdk2 and p35-Cdk5 complexes and to a lesser extent by the cyclin D3/Cdk4 and cyclin B/Cdk1, in vitro. Dephosphorylated at Ser-368 by CDC14A and CDC14B around early anaphase. Post-translationally, acetylated by EP300; acetylation leads both to the decreased of SIRT2-mediated alpha-tubulin deacetylase activity and SIRT2-mediated down-regulation of TP53 transcriptional activity. In terms of processing, ubiquitinated. As to expression, isoform 1 is expressed in heart, liver and skeletal muscle, weakly expressed in the cortex. Isoform 2 is strongly expressed in the cortex, weakly expressed in heart and liver. Weakly expressed in several malignancies including breast, liver, brain, kidney and prostate cancers compared to normal tissues. Weakly expressed in glioma cell lines compared to normal brain tissues (at protein level). Widely expressed. Highly expressed in heart, brain and skeletal muscle, while it is weakly expressed in placenta and lung. Down-regulated in many gliomas suggesting that it may act as a tumor suppressor gene in human gliomas possibly through the regulation of microtubule network.

Its subcellular location is the nucleus. The protein resides in the cytoplasm. It localises to the perinuclear region. It is found in the cytoskeleton. The protein localises to the microtubule organizing center. Its subcellular location is the centrosome. The protein resides in the centriole. It localises to the spindle. It is found in the midbody. The protein localises to the chromosome. Its subcellular location is the perikaryon. The protein resides in the cell projection. It localises to the growth cone. It is found in the myelin membrane. It carries out the reaction N(6)-acetyl-L-lysyl-[protein] + NAD(+) + H2O = 2''-O-acetyl-ADP-D-ribose + nicotinamide + L-lysyl-[protein]. The enzyme catalyses N(6)-tetradecanoyl-L-lysyl-[protein] + NAD(+) + H2O = 2''-O-tetradecanoyl-ADP-D-ribose + nicotinamide + L-lysyl-[protein]. The catalysed reaction is N(6)-hexadecanoyl-L-lysyl-[protein] + NAD(+) + H2O = 2''-O-hexadecanoyl-ADP-D-ribose + nicotinamide + L-lysyl-[protein]. With respect to regulation, inhibited by Sirtinol, A3 and M15 small molecules. Inhibited by nicotinamide. Inhibited by a macrocyclic peptide inhibitor S2iL5. Inhibited by EP300-induced acetylation. Functionally, NAD-dependent protein deacetylase, which deacetylates internal lysines on histone and alpha-tubulin as well as many other proteins such as key transcription factors. Participates in the modulation of multiple and diverse biological processes such as cell cycle control, genomic integrity, microtubule dynamics, cell differentiation, metabolic networks, and autophagy. Plays a major role in the control of cell cycle progression and genomic stability. Functions in the antephase checkpoint preventing precocious mitotic entry in response to microtubule stress agents, and hence allowing proper inheritance of chromosomes. Positively regulates the anaphase promoting complex/cyclosome (APC/C) ubiquitin ligase complex activity by deacetylating CDC20 and FZR1, then allowing progression through mitosis. Associates both with chromatin at transcriptional start sites (TSSs) and enhancers of active genes. Plays a role in cell cycle and chromatin compaction through epigenetic modulation of the regulation of histone H4 'Lys-20' methylation (H4K20me1) during early mitosis. Specifically deacetylates histone H4 at 'Lys-16' (H4K16ac) between the G2/M transition and metaphase enabling H4K20me1 deposition by KMT5A leading to ulterior levels of H4K20me2 and H4K20me3 deposition throughout cell cycle, and mitotic S-phase progression. Deacetylates KMT5A modulating KMT5A chromatin localization during the mitotic stress response. Also deacetylates histone H3 at 'Lys-57' (H3K56ac) during the mitotic G2/M transition. Upon bacterium Listeria monocytogenes infection, deacetylates 'Lys-18' of histone H3 in a receptor tyrosine kinase MET- and PI3K/Akt-dependent manner, thereby inhibiting transcriptional activity and promoting late stages of listeria infection. During oocyte meiosis progression, may deacetylate histone H4 at 'Lys-16' (H4K16ac) and alpha-tubulin, regulating spindle assembly and chromosome alignment by influencing microtubule dynamics and kinetochore function. Deacetylates histone H4 at 'Lys-16' (H4K16ac) at the VEGFA promoter and thereby contributes to regulate expression of VEGFA, a key regulator of angiogenesis. Deacetylates alpha-tubulin at 'Lys-40' and hence controls neuronal motility, oligodendroglial cell arbor projection processes and proliferation of non-neuronal cells. Phosphorylation at Ser-368 by a G1/S-specific cyclin E-CDK2 complex inactivates SIRT2-mediated alpha-tubulin deacetylation, negatively regulating cell adhesion, cell migration and neurite outgrowth during neuronal differentiation. Deacetylates PARD3 and participates in the regulation of Schwann cell peripheral myelination formation during early postnatal development and during postinjury remyelination. Involved in several cellular metabolic pathways. Plays a role in the regulation of blood glucose homeostasis by deacetylating and stabilizing phosphoenolpyruvate carboxykinase PCK1 activity in response to low nutrient availability. Acts as a key regulator in the pentose phosphate pathway (PPP) by deacetylating and activating the glucose-6-phosphate G6PD enzyme, and therefore, stimulates the production of cytosolic NADPH to counteract oxidative damage. Maintains energy homeostasis in response to nutrient deprivation as well as energy expenditure by inhibiting adipogenesis and promoting lipolysis. Attenuates adipocyte differentiation by deacetylating and promoting FOXO1 interaction to PPARG and subsequent repression of PPARG-dependent transcriptional activity. Plays a role in the regulation of lysosome-mediated degradation of protein aggregates by autophagy in neuronal cells. Deacetylates FOXO1 in response to oxidative stress or serum deprivation, thereby negatively regulating FOXO1-mediated autophagy. Deacetylates a broad range of transcription factors and co-regulators regulating target gene expression. Deacetylates transcriptional factor FOXO3 stimulating the ubiquitin ligase SCF(SKP2)-mediated FOXO3 ubiquitination and degradation. Deacetylates HIF1A and therefore promotes HIF1A degradation and inhibition of HIF1A transcriptional activity in tumor cells in response to hypoxia. Deacetylates RELA in the cytoplasm inhibiting NF-kappaB-dependent transcription activation upon TNF-alpha stimulation. Inhibits transcriptional activation by deacetylating p53/TP53 and EP300. Also deacetylates EIF5A. Functions as a negative regulator on oxidative stress-tolerance in response to anoxia-reoxygenation conditions. Plays a role as tumor suppressor. In addition to protein deacetylase activity, also has activity toward long-chain fatty acyl groups and mediates protein-lysine demyristoylation and depalmitoylation of target proteins, such as ARF6 and KRAS, thereby regulating their association with membranes. Deacetylates EP300, alpha-tubulin and histone H3 and H4. Its function is as follows. Lacks deacetylation activity, at least toward known SIRT2 targets. The sequence is that of NAD-dependent protein deacetylase sirtuin-2 (SIRT2) from Homo sapiens (Human).